The sequence spans 146 residues: Large ribosomal subunit protein uL15 (146 aa).

Residues 18-45 are disordered; the sequence is VLGRGLGCGKGKTSGRGHKGQKARSGCA. Positions 30–39 are enriched in basic residues; that stretch reads TSGRGHKGQK.

The protein belongs to the universal ribosomal protein uL15 family. Part of the 50S ribosomal subunit.

Binds to the 23S rRNA. This Anaplasma marginale (strain St. Maries) protein is Large ribosomal subunit protein uL15.